The following is a 47-amino-acid chain: Large ribosomal subunit protein bL27c (47 aa).

The tract at residues 1–21 is disordered; that stretch reads STKNGRDSNAQRLGVKKYGGE.

This sequence belongs to the bacterial ribosomal protein bL27 family.

It is found in the plastid. It localises to the chloroplast. This chain is Large ribosomal subunit protein bL27c (rpl27), found in Porphyridium purpureum (Red alga).